Reading from the N-terminus, the 147-residue chain is Large ribosomal subunit protein uL13 (147 aa).

The protein belongs to the universal ribosomal protein uL13 family. Part of the 50S ribosomal subunit.

Functionally, this protein is one of the early assembly proteins of the 50S ribosomal subunit, although it is not seen to bind rRNA by itself. It is important during the early stages of 50S assembly. The polypeptide is Large ribosomal subunit protein uL13 (Rhodococcus opacus (strain B4)).